The primary structure comprises 387 residues: Gibberellic acid methyltransferase 2 (387 aa).

Residue Tyr-33 participates in S-adenosyl-L-homocysteine binding. Residue Gln-40 coordinates gibberellin A4. Cys-74, Asn-79, Asp-113, Leu-114, Ser-146, and Phe-147 together coordinate S-adenosyl-L-homocysteine. Gibberellin A4-binding residues include His-167 and Trp-168. Mg(2+) contacts are provided by Asn-185, Arg-275, Asp-276, Phe-278, and Asn-279.

Belongs to the methyltransferase superfamily. Type-7 methyltransferase family. SABATH subfamily. Requires Mg(2+) as cofactor. As to expression, expressed in siliques and germinating seeds. Not detected in leaves, stems, flowers and roots.

It carries out the reaction gibberellin A4 + S-adenosyl-L-methionine = O-methyl gibberellin A4 + S-adenosyl-L-homocysteine. With respect to regulation, down-regulated by Zn(2+), Cu(2+) and Fe(3+). No effect of K(+), NH(4+), Na(+), Ca(2+), Mg(2+), Mn(2+) and Fe(2+). Functionally, methylates the carboxyl group of several gibberellins (GAs). Substrate preference is GA4 &gt; GA34 &gt; GA9 &gt; GA3 &gt; GA1 &gt; GA51 &gt; GA20. No activity with diterpenes abietic acid and ent-kaurenoic acid. The chain is Gibberellic acid methyltransferase 2 (GAMT2) from Arabidopsis thaliana (Mouse-ear cress).